We begin with the raw amino-acid sequence, 117 residues long: Large ribosomal subunit protein uL23 (117 aa).

Belongs to the universal ribosomal protein uL23 family. As to quaternary structure, part of the 50S ribosomal subunit. Contacts protein L29, and trigger factor when it is bound to the ribosome.

In terms of biological role, one of the early assembly proteins it binds 23S rRNA. One of the proteins that surrounds the polypeptide exit tunnel on the outside of the ribosome. Forms the main docking site for trigger factor binding to the ribosome. This chain is Large ribosomal subunit protein uL23, found in Acetivibrio thermocellus (strain ATCC 27405 / DSM 1237 / JCM 9322 / NBRC 103400 / NCIMB 10682 / NRRL B-4536 / VPI 7372) (Clostridium thermocellum).